The sequence spans 206 residues: Large ribosomal subunit protein uL4 (206 aa).

Residues Arg44–Thr77 are disordered. A compositionally biased stretch (basic residues) spans Val56–Gly70.

Belongs to the universal ribosomal protein uL4 family. Part of the 50S ribosomal subunit.

In terms of biological role, one of the primary rRNA binding proteins, this protein initially binds near the 5'-end of the 23S rRNA. It is important during the early stages of 50S assembly. It makes multiple contacts with different domains of the 23S rRNA in the assembled 50S subunit and ribosome. Functionally, forms part of the polypeptide exit tunnel. This Methylibium petroleiphilum (strain ATCC BAA-1232 / LMG 22953 / PM1) protein is Large ribosomal subunit protein uL4.